The following is a 250-amino-acid chain: Triosephosphate isomerase (250 aa).

9–11 contacts substrate; sequence NWK. Catalysis depends on histidine 95, which acts as the Electrophile. The active-site Proton acceptor is the glutamate 167. Substrate-binding positions include glycine 173, serine 213, and 234-235; that span reads GG.

This sequence belongs to the triosephosphate isomerase family. In terms of assembly, homodimer.

The protein resides in the cytoplasm. It carries out the reaction D-glyceraldehyde 3-phosphate = dihydroxyacetone phosphate. It participates in carbohydrate biosynthesis; gluconeogenesis. The protein operates within carbohydrate degradation; glycolysis; D-glyceraldehyde 3-phosphate from glycerone phosphate: step 1/1. In terms of biological role, involved in the gluconeogenesis. Catalyzes stereospecifically the conversion of dihydroxyacetone phosphate (DHAP) to D-glyceraldehyde-3-phosphate (G3P). This chain is Triosephosphate isomerase, found in Herpetosiphon aurantiacus (strain ATCC 23779 / DSM 785 / 114-95).